The chain runs to 404 residues: GID complex subunit 9 (404 aa).

Residues 116–148 (SRVRLNRLVADYMMANGYHGAAALLCKDSQLEN) enclose the LisH domain. Residues 154-211 (IYKRYQLIHDSILQQELKEVLSWCSEHRAILKKNNSTLELEVRLQRFIELIKSKKLCQ) form the CTLH domain. The RING-Gid-type zinc-finger motif lies at 317–389 (CPVCTPCLND…REGFLRDPYS (73 aa)).

It belongs to the FYV10 family. Identified in the GID/CTLH complex. In the absence of stress, the complex exists as an inactive anticipatory complex (GID(Ant)), composed of Gid1, the E3 ubiquitin-ligase Gid2, Gid5, Gid8, and the RING-like subunit Gid9, awaiting a substrate receptor to form the active E3 ligase complex. When cells are shifted to glucose-containing medium, the substrate receptor Gid4 is induced and becomes part of the complex, named GID(SR4). Additionally, Gid7 transforms the GID(SR4) E3 ligase core into a higher-order supramolecular assembly (Chelator-GID(SR4)). Under osmotic or heat stress, the substrate receptor Gid10 is induced and becomes part of the complex, named GID(SR10).

Its subcellular location is the cytoplasm. It is found in the nucleus. It catalyses the reaction S-ubiquitinyl-[E2 ubiquitin-conjugating enzyme]-L-cysteine + [acceptor protein]-L-lysine = [E2 ubiquitin-conjugating enzyme]-L-cysteine + N(6)-ubiquitinyl-[acceptor protein]-L-lysine.. The protein operates within protein modification; protein ubiquitination. Its function is as follows. Component of the GID E3 ligase complex recruiting N termini and catalyzing ubiquitination of proteins targeted for degradation. GID E3 is regulated through assembly with interchangeable N-degron-binding substrate receptors induced by distinct environmental perturbations. Required for the adaptation to the presence of glucose in the growth medium; mediates in association with the substrate receptor VID24/GID4 the degradation of enzymes involved in gluconeogenesis when cells are shifted to glucose-containing medium. The chain is GID complex subunit 9 (gid9) from Schizosaccharomyces pombe (strain 972 / ATCC 24843) (Fission yeast).